Reading from the N-terminus, the 221-residue chain is Thyrotroph embryonic factor (221 aa).

The tract at residues 72-116 (ESASSSTASPPSSSTAVFQPSETVSSTESSLEKERETPSPIDPNC) is disordered. Low complexity predominate over residues 73–100 (SASSSTASPPSSSTAVFQPSETVSSTES). The bZIP domain maps to 173-221 (DEKYWTRRKKNNVAAKRSRDARRLKENQITIRAAFLEKENTALRTEVAD). Residues 175–195 (KYWTRRKKNNVAAKRSRDARR) form a basic motif region. The tract at residues 196 to 203 (LKENQITI) is leucine-zipper.

This sequence belongs to the bZIP family. PAR subfamily. As to quaternary structure, binds DNA as a homodimer or a heterodimer. Can form a heterodimer with DBP.

It localises to the nucleus. Functionally, transcription factor that binds to and transactivates the TSHB promoter. Binds to a minimal DNA-binding sequence 5'-[TC][AG][AG]TTA[TC][AG]-3'. This chain is Thyrotroph embryonic factor (TEF), found in Phodopus sungorus (Striped hairy-footed hamster).